Here is a 291-residue protein sequence, read N- to C-terminus: MSKSWGKFIEEEEAEMASRRNLMIVDGTNLGFRFKHNNSKKPFASSYVSTIQSLAKSYSARTTIVLGDKGKSVFRLEHLPEYKGNRDEKYAQRTEEEKALDEQFFEYLKDAFELCKTTFPTFTIRGVEADDMAAYIVKLIGHLYDHVWLISTDGDWDTLLTDKVSRFSFTTRREYHLRDMYEHHNVDDVEQFISLKAIMGDLGDNIRGVEGIGAKRGYNIIREFGNVLDIIDQLPLPGKQKYIQNLNASEELLFRNLILVDLPTYCVDAIAAVGQDVLDKFTKDILEIAEQ.

The helical arch stretch occupies residues 82-116; sequence YKGNRDEKYAQRTEEEKALDEQFFEYLKDAFELCK. A DNA-binding site is contributed by K83. 4 residues coordinate Mg(2+): D130, D153, D155, and D201. Positions 188–224 are DNA-binding; H3TH; it reads DVEQFISLKAIMGDLGDNIRGVEGIGAKRGYNIIREF. A 5'-3' exonuclease domain is found at 190–263; that stretch reads EQFISLKAIM…FRNLILVDLP (74 aa). K(+)-binding residues include V209 and I212.

Mg(2+) is required as a cofactor. K(+) serves as cofactor.

The enzyme catalyses Exonucleolytic cleavage in the 5'- to 3'-direction to yield nucleoside 5'-phosphates.. Its activity is regulated as follows. Inhibited by p-hydroxymercuribenzoate (PHMB). Functionally, catalyzes both the 5'-exonucleolytic and structure-specific endonucleolytic hydrolysis of DNA branched nucleic acid molecules and probably plays a role in viral genome replication. Active on flap (branched duplex DNA containing a free single-stranded 5'-end), 5'overhangs and pseudo-Y structures. The substrates require a free, single-stranded 5' end, with endonucleolytic hydrolysis occurring at the junction of double- and single-stranded DNA. This function may be used for example to trim such branched molecules generated by Okazaki fragments synthesis during replication. The chain is Flap endonuclease (D15) from Escherichia phage T5 (Enterobacteria phage T5).